We begin with the raw amino-acid sequence, 743 residues long: MSCRQSSSSFWSSSSSCGGGGGRGGSGGSMRSSFSRSSRAGGGGGGRFNSSSGFSGGGFSACGGGGGGSFGSSYGGGYGGGFSTGSYSGMFGGGSGGGFGGGSGGGFGGGSGGGFGGGSGGGEGGILNTNEKIVMQNLNSRLASYMEKVLELEESNTAMEKQIQDWYSKRGPKVFQKDNTHYYDTIEDLKDRIVDLTVRNNKTLVDIDNTRMTMDDFRVKLEMEQSLRQGVEGDINGLKKVLDDLVMAKSDLEILLDSLEDEKNALTKNHKEEMSQLTGQNDGDVNVEINVAPSTDLTRVLNDMREEYEQLISKNRQDIEQHYESKMTQIEQQMTNSGQEMESNMKQVSQLQHTIQELNVELQTQLTTKSALEKALEDTKNRYCGQLQQIQEQISELEAQLAEIRAETECQSQEYSILLSIKTRLEKEIETYRELLEGGQQDFESSGAGQIGFGSGKGRQRGSGGSYGGGSGGSYGGGSGGSYGGGSGGSYGGGSGGSYGGGSGGSHGGKSGGSHGGGSGGSYGGESGGSHGGGSGGSYGGGSGGSHGGKSGGGYGGGSSSGGGSGGSYGGGSGGSHGGGSGGSYGGGSGGSHGGKSGGGYGGGSSSGGGSGGSYGGGSGGSHGGKSGGSYGGGSGGSYGGGSGGSHGGKSGGGYGGGSSSGGGSGGSYGGGSGGSHGGKSGGSYGGGSSSGGGSGGSYGGGSGSGGGSGGSYGGGNRRPSQSQSSSKSADCDDDSQEHKMRY.

The span at 1–16 (MSCRQSSSSFWSSSSS) shows a compositional bias: low complexity. Positions 1-46 (MSCRQSSSSFWSSSSSCGGGGGRGGSGGSMRSSFSRSSRAGGGGGG) are disordered. The head stretch occupies residues 1-130 (MSCRQSSSSF…GGEGGILNTN (130 aa)). Phosphoserine occurs at positions 14 and 16. Over residues 17–28 (CGGGGGRGGSGG) the composition is skewed to gly residues. A compositionally biased stretch (low complexity) spans 29-39 (SMRSSFSRSSR). 2 positions are modified to phosphoserine: S55 and S155. The segment at 131 to 166 (EKIVMQNLNSRLASYMEKVLELEESNTAMEKQIQDW) is coil 1A. One can recognise an IF rod domain in the interval 131 to 443 (EKIVMQNLNS…ELLEGGQQDF (313 aa)). A linker 1 region spans residues 167–185 (YSKRGPKVFQKDNTHYYDT). Residues 186 to 277 (IEDLKDRIVD…KNHKEEMSQL (92 aa)) form a coil 1B region. The interval 278-300 (TGQNDGDVNVEINVAPSTDLTRV) is linker 12. The tract at residues 301-439 (LNDMREEYEQ…ETYRELLEGG (139 aa)) is coil 2. Disordered regions lie at residues 440–468 (QQDFESSGAGQIGFGSGKGRQRGSGGSYG) and 501–743 (GGSG…KMRY). The segment at 440–709 (QQDFESSGAG…GGGSGSGGGS (270 aa)) is tail. Gly residues-rich tracts occupy residues 449–468 (GQIGFGSGKGRQRGSGGSYG) and 501–717 (GGSG…GGGN).

This sequence belongs to the intermediate filament family. As to quaternary structure, heterotetramer of two type I and two type II keratins. Expressed in footpad epidermis and testis (at protein level).

May serve an important special function either in the mature palmar and plantar skin tissue or in the morphogenetic program of the formation of these tissues. Plays a role in keratin filament assembly. Plays an essential role in the correct development of sperm. The polypeptide is Keratin, type I cytoskeletal 9 (Mus musculus (Mouse)).